The chain runs to 288 residues: Light-independent protochlorophyllide reductase iron-sulfur ATP-binding protein (288 aa).

ATP is bound by residues 10-15 (GIGKST) and lysine 39. Serine 14 contacts Mg(2+). The [4Fe-4S] cluster site is built by cysteine 95 and cysteine 129. ATP contacts are provided by residues 180–181 (NR) and 204–206 (PLL).

Belongs to the NifH/BchL/ChlL family. In terms of assembly, homodimer. Protochlorophyllide reductase is composed of three subunits; ChlL, ChlN and ChlB. The cofactor is [4Fe-4S] cluster.

The protein resides in the plastid. It localises to the chloroplast. The enzyme catalyses chlorophyllide a + oxidized 2[4Fe-4S]-[ferredoxin] + 2 ADP + 2 phosphate = protochlorophyllide a + reduced 2[4Fe-4S]-[ferredoxin] + 2 ATP + 2 H2O. It participates in porphyrin-containing compound metabolism; chlorophyll biosynthesis (light-independent). In terms of biological role, component of the dark-operative protochlorophyllide reductase (DPOR) that uses Mg-ATP and reduced ferredoxin to reduce ring D of protochlorophyllide (Pchlide) to form chlorophyllide a (Chlide). This reaction is light-independent. The L component serves as a unique electron donor to the NB-component of the complex, and binds Mg-ATP. In Stigeoclonium helveticum (Green alga), this protein is Light-independent protochlorophyllide reductase iron-sulfur ATP-binding protein.